A 74-amino-acid polypeptide reads, in one-letter code: Chitinases 70, 30, and 20.5 kDa (74 aa).

The tract at residues X1–T27 is N-terminus of 70 kDa chitinase. The N-terminus of 30 kDa chitinase stretch occupies residues A28–D52. The tract at residues X53 to C74 is N-terminus of 20.5 kDa chitinase.

Belongs to the glycosyl hydrolase 18 family. Chitinase class II subfamily. Homodimer, but homotrimers and homotetramers could be observed for the 20.5 and 30 kDa chitinases. Post-translationally, the 70 kDa chitinase is probably the precursor protein of the 30 and 20.5 kDa chitinases.

It catalyses the reaction Random endo-hydrolysis of N-acetyl-beta-D-glucosaminide (1-&gt;4)-beta-linkages in chitin and chitodextrins.. Able to cleave chitin oligomers from N=3 to 6. The protein is Chitinases 70, 30, and 20.5 kDa of Streptomyces olivaceoviridis (Streptomyces corchorusii).